The chain runs to 431 residues: tRNA(Ile)-lysidine synthase (431 aa).

Position 25–30 (25–30) interacts with ATP; it reads SGGPDS.

It belongs to the tRNA(Ile)-lysidine synthase family.

It localises to the cytoplasm. It catalyses the reaction cytidine(34) in tRNA(Ile2) + L-lysine + ATP = lysidine(34) in tRNA(Ile2) + AMP + diphosphate + H(+). Functionally, ligates lysine onto the cytidine present at position 34 of the AUA codon-specific tRNA(Ile) that contains the anticodon CAU, in an ATP-dependent manner. Cytidine is converted to lysidine, thus changing the amino acid specificity of the tRNA from methionine to isoleucine. The protein is tRNA(Ile)-lysidine synthase of Lactobacillus gasseri (strain ATCC 33323 / DSM 20243 / BCRC 14619 / CIP 102991 / JCM 1131 / KCTC 3163 / NCIMB 11718 / NCTC 13722 / AM63).